Reading from the N-terminus, the 171-residue chain is UPF0098 protein aq_1250 (171 aa).

The protein belongs to the UPF0098 family.

This Aquifex aeolicus (strain VF5) protein is UPF0098 protein aq_1250.